We begin with the raw amino-acid sequence, 363 residues long: D-xylulose reductase (363 aa).

Positions 41, 66, and 159 each coordinate Zn(2+). 183–188 (GAGPVG) is an NAD(+) binding site.

It belongs to the zinc-containing alcohol dehydrogenase family. The cofactor is Zn(2+).

The catalysed reaction is xylitol + NAD(+) = D-xylulose + NADH + H(+). Its pathway is carbohydrate degradation; L-arabinose degradation via L-arabinitol; D-xylulose 5-phosphate from L-arabinose (fungal route): step 4/5. The protein is D-xylulose reductase (XYL2) of Scheffersomyces stipitis (strain ATCC 58785 / CBS 6054 / NBRC 10063 / NRRL Y-11545) (Yeast).